A 552-amino-acid polypeptide reads, in one-letter code: L-ascorbate oxidase (552 aa).

Plastocyanin-like domains are found at residues 1 to 122 (SQIR…LIVD) and 134 to 300 (DGEI…NYLP). 3 disulfides stabilise this stretch: cysteine 19–cysteine 201, cysteine 81–cysteine 538, and cysteine 180–cysteine 193. The Cu cation site is built by histidine 60 and histidine 62. The N-linked (GlcNAc...) asparagine glycan is linked to asparagine 92. The Cu cation site is built by histidine 104 and histidine 106. N-linked (GlcNAc...) asparagine glycans are attached at residues asparagine 325 and asparagine 440. The Plastocyanin-like 3 domain occupies 344–523 (NRRIFLLNTQ…HMGMGVVFAE (180 aa)). Cu cation is bound by residues histidine 445, histidine 448, histidine 450, histidine 506, cysteine 507, histidine 508, histidine 512, and methionine 517.

This sequence belongs to the multicopper oxidase family. As to quaternary structure, dimer. Cu cation serves as cofactor.

Its subcellular location is the secreted. The catalysed reaction is 4 L-ascorbate + O2 = 4 monodehydro-L-ascorbate radical + 2 H2O. Functionally, may be involved in a redox system involving ascorbic acid. The sequence is that of L-ascorbate oxidase from Cucurbita pepo var. melopepo (Zucchini).